We begin with the raw amino-acid sequence, 170 residues long: Dual-action ribosomal maturation protein DarP (170 aa).

Belongs to the DarP family.

It localises to the cytoplasm. Member of a network of 50S ribosomal subunit biogenesis factors which assembles along the 30S-50S interface, preventing incorrect 23S rRNA structures from forming. Promotes peptidyl transferase center (PTC) maturation. The sequence is that of Dual-action ribosomal maturation protein DarP from Neisseria meningitidis serogroup A / serotype 4A (strain DSM 15465 / Z2491).